The sequence spans 274 residues: Glutamate--cysteine ligase regulatory subunit (274 aa).

Position 59 is a phosphoserine (S59). K263 bears the N6-acetyllysine mark.

It belongs to the aldo/keto reductase family. Glutamate--cysteine ligase light chain subfamily. As to quaternary structure, heterodimer of a catalytic heavy chain and a regulatory light chain. In terms of tissue distribution, most abundant in kidney. Also found in liver and testis.

The protein operates within sulfur metabolism; glutathione biosynthesis; glutathione from L-cysteine and L-glutamate: step 1/2. This is Glutamate--cysteine ligase regulatory subunit (Gclm) from Rattus norvegicus (Rat).